The following is a 432-amino-acid chain: Adenylosuccinate synthetase 1 (432 aa).

Residues 12 to 18 (GDEGKGR) and 40 to 42 (GHT) contribute to the GTP site. Aspartate 13 (proton acceptor) is an active-site residue. Residues aspartate 13 and glycine 40 each contribute to the Mg(2+) site. IMP contacts are provided by residues 13–16 (DEGK), 38–41 (NAGH), threonine 128, arginine 142, glutamine 222, threonine 237, and arginine 301. Catalysis depends on histidine 41, which acts as the Proton donor. 297 to 303 (TNTGRPR) contacts substrate. GTP is bound by residues arginine 303, 329–331 (KLD), and 411–413 (STG).

This sequence belongs to the adenylosuccinate synthetase family. Homodimer. It depends on Mg(2+) as a cofactor.

The protein localises to the cytoplasm. The catalysed reaction is IMP + L-aspartate + GTP = N(6)-(1,2-dicarboxyethyl)-AMP + GDP + phosphate + 2 H(+). It participates in purine metabolism; AMP biosynthesis via de novo pathway; AMP from IMP: step 1/2. Plays an important role in the de novo pathway of purine nucleotide biosynthesis. Catalyzes the first committed step in the biosynthesis of AMP from IMP. This is Adenylosuccinate synthetase 1 from Chromobacterium violaceum (strain ATCC 12472 / DSM 30191 / JCM 1249 / CCUG 213 / NBRC 12614 / NCIMB 9131 / NCTC 9757 / MK).